Here is a 725-residue protein sequence, read N- to C-terminus: Phosphatase and actin regulator 4A (725 aa).

Residues 1–12 (MGQGASTQTLNP) show a composition bias toward polar residues. Residues 1–597 (MGQGASTQTL…SSTWNNKEQW (597 aa)) form a disordered region. Over residues 55–64 (KPWKWRKKKT) the composition is skewed to basic residues. Basic and acidic residues-rich tracts occupy residues 65 to 100 (SDKF…KDIP), 124 to 147 (GDRK…GERK), and 155 to 164 (KRNDGTERMT). Residues 75 to 100 (LVLERKMSVRKPREELIERGLLKDIP) form an RPEL 1 repeat. Residues 166–177 (MIQSFQKMSLMQ) show a composition bias toward polar residues. The span at 212–221 (VIAAPSSAEP) shows a compositional bias: low complexity. Residues 222–235 (APVPPPPIAKPPPR) are compositionally biased toward pro residues. Composition is skewed to low complexity over residues 265 to 276 (PAHTTPATVSTH) and 292 to 313 (PAHV…LLKQ). Positions 359 to 368 (TPVTKRNSGD) are enriched in polar residues. Residues 374–384 (PEPPPPAPTSV) show a composition bias toward pro residues. A compositionally biased stretch (low complexity) spans 385 to 401 (PIPAAAPISAPPSTQSD). Residues 402 to 417 (PPSPTTEPPSQPPPLP) are compositionally biased toward pro residues. Positions 497–510 (QKPELEPRSRRGLV) are enriched in basic and acidic residues. 2 stretches are compositionally biased toward acidic residues: residues 522–536 (AGSE…ESDS) and 545–554 (DNEEDDDEED). Positions 567-585 (KDTLALKLERQQEKEKSQE) are enriched in basic and acidic residues. 2 RPEL repeats span residues 606 to 631 (TALT…LAKN) and 644 to 669 (RRLT…RFHE).

Belongs to the phosphatase and actin regulator family. In terms of assembly, binds ppp1ca and actin.

The protein localises to the cytoplasm. It is found in the cell projection. The protein resides in the lamellipodium. Functionally, regulator of protein phosphatase 1 (PP1) required for neural tube and optic fissure closure, and enteric neural crest cell (ENCCs) migration during development. Acts as an activator of PP1. During neural tube closure, localizes to the ventral neural tube and activates PP1, leading to down-regulate cell proliferation within cranial neural tissue and the neural retina. Also acts as a regulator of migration of enteric neural crest cells (ENCCs) by activating PP1, leading to repression of the integrin signaling through the rho/rock pathway. This is Phosphatase and actin regulator 4A (phactr4a) from Danio rerio (Zebrafish).